The following is a 282-amino-acid chain: NADPH-dependent 7-cyano-7-deazaguanine reductase (282 aa).

88–90 contributes to the substrate binding site; sequence IES. 90–91 provides a ligand contact to NADPH; it reads SK. C190 acts as the Thioimide intermediate in catalysis. D197 serves as the catalytic Proton donor. 229–230 provides a ligand contact to substrate; it reads HE. Residue 258–259 coordinates NADPH; sequence RG.

Belongs to the GTP cyclohydrolase I family. QueF type 2 subfamily. In terms of assembly, homodimer.

It localises to the cytoplasm. It carries out the reaction 7-aminomethyl-7-carbaguanine + 2 NADP(+) = 7-cyano-7-deazaguanine + 2 NADPH + 3 H(+). Its pathway is tRNA modification; tRNA-queuosine biosynthesis. Its function is as follows. Catalyzes the NADPH-dependent reduction of 7-cyano-7-deazaguanine (preQ0) to 7-aminomethyl-7-deazaguanine (preQ1). The protein is NADPH-dependent 7-cyano-7-deazaguanine reductase of Escherichia coli O127:H6 (strain E2348/69 / EPEC).